The following is a 145-amino-acid chain: Transcription antitermination protein NusB (145 aa).

The protein belongs to the NusB family.

Involved in transcription antitermination. Required for transcription of ribosomal RNA (rRNA) genes. Binds specifically to the boxA antiterminator sequence of the ribosomal RNA (rrn) operons. This is Transcription antitermination protein NusB from Geobacter sp. (strain M21).